We begin with the raw amino-acid sequence, 315 residues long: DNA-directed RNA polymerase subunit alpha (315 aa).

Residues 1-229 (MLDSKLKAPV…EHLTYFSNPQ (229 aa)) form an alpha N-terminal domain (alpha-NTD) region. Residues 247–315 (EQEEELDLPL…LEKKGFTLKE (69 aa)) are alpha C-terminal domain (alpha-CTD).

The protein belongs to the RNA polymerase alpha chain family. In terms of assembly, homodimer. The RNAP catalytic core consists of 2 alpha, 1 beta, 1 beta' and 1 omega subunit. When a sigma factor is associated with the core the holoenzyme is formed, which can initiate transcription.

It catalyses the reaction RNA(n) + a ribonucleoside 5'-triphosphate = RNA(n+1) + diphosphate. DNA-dependent RNA polymerase catalyzes the transcription of DNA into RNA using the four ribonucleoside triphosphates as substrates. The sequence is that of DNA-directed RNA polymerase subunit alpha from Thermus thermophilus (strain ATCC BAA-163 / DSM 7039 / HB27).